We begin with the raw amino-acid sequence, 505 residues long: Flagellin (505 aa).

It belongs to the bacterial flagellin family.

The protein localises to the secreted. It localises to the bacterial flagellum. Its function is as follows. Flagellin is the subunit protein which polymerizes to form the filaments of bacterial flagella. This Salmonella budapest protein is Flagellin (fliC).